The following is a 440-amino-acid chain: Chromosome partition protein MukF (440 aa).

The interval 208-236 is leucine-zipper; it reads LSETSGTLRELQDTLEAAGDKLQANLLRI.

Belongs to the MukF family. Interacts, and probably forms a ternary complex, with MukE and MukB via its C-terminal region. The complex formation is stimulated by calcium or magnesium. It is required for an interaction between MukE and MukB.

Its subcellular location is the cytoplasm. The protein resides in the nucleoid. Its function is as follows. Involved in chromosome condensation, segregation and cell cycle progression. May participate in facilitating chromosome segregation by condensation DNA from both sides of a centrally located replisome during cell division. Not required for mini-F plasmid partitioning. Probably acts via its interaction with MukB and MukE. Overexpression results in anucleate cells. It has a calcium binding activity. The sequence is that of Chromosome partition protein MukF from Escherichia coli O157:H7.